Here is a 76-residue protein sequence, read N- to C-terminus: Small ribosomal subunit protein bS18 (76 aa).

Belongs to the bacterial ribosomal protein bS18 family. As to quaternary structure, part of the 30S ribosomal subunit. Forms a tight heterodimer with protein bS6.

In terms of biological role, binds as a heterodimer with protein bS6 to the central domain of the 16S rRNA, where it helps stabilize the platform of the 30S subunit. This Nitrosomonas eutropha (strain DSM 101675 / C91 / Nm57) protein is Small ribosomal subunit protein bS18.